A 105-amino-acid chain; its full sequence is Large ribosomal subunit protein uL24 (105 aa).

This sequence belongs to the universal ribosomal protein uL24 family. As to quaternary structure, part of the 50S ribosomal subunit.

In terms of biological role, one of two assembly initiator proteins, it binds directly to the 5'-end of the 23S rRNA, where it nucleates assembly of the 50S subunit. One of the proteins that surrounds the polypeptide exit tunnel on the outside of the subunit. The protein is Large ribosomal subunit protein uL24 of Wolbachia sp. subsp. Brugia malayi (strain TRS).